A 502-amino-acid polypeptide reads, in one-letter code: ATP synthase subunit alpha (502 aa).

169-176 (GDRQTGKT) is an ATP binding site.

This sequence belongs to the ATPase alpha/beta chains family. F-type ATPases have 2 components, CF(1) - the catalytic core - and CF(0) - the membrane proton channel. CF(1) has five subunits: alpha(3), beta(3), gamma(1), delta(1), epsilon(1). CF(0) has three main subunits: a(1), b(2) and c(9-12). The alpha and beta chains form an alternating ring which encloses part of the gamma chain. CF(1) is attached to CF(0) by a central stalk formed by the gamma and epsilon chains, while a peripheral stalk is formed by the delta and b chains.

The protein localises to the cell inner membrane. The enzyme catalyses ATP + H2O + 4 H(+)(in) = ADP + phosphate + 5 H(+)(out). Produces ATP from ADP in the presence of a proton gradient across the membrane. The alpha chain is a regulatory subunit. The protein is ATP synthase subunit alpha of Geotalea daltonii (strain DSM 22248 / JCM 15807 / FRC-32) (Geobacter daltonii).